Reading from the N-terminus, the 314-residue chain is Acetyl-coenzyme A carboxylase carboxyl transferase subunit alpha (314 aa).

In terms of domain architecture, CoA carboxyltransferase C-terminal spans 32-289 (EIDMLEASLE…KSAFVAQLDS (258 aa)).

This sequence belongs to the AccA family. Acetyl-CoA carboxylase is a heterohexamer composed of biotin carboxyl carrier protein (AccB), biotin carboxylase (AccC) and two subunits each of ACCase subunit alpha (AccA) and ACCase subunit beta (AccD).

The protein localises to the cytoplasm. The catalysed reaction is N(6)-carboxybiotinyl-L-lysyl-[protein] + acetyl-CoA = N(6)-biotinyl-L-lysyl-[protein] + malonyl-CoA. Its pathway is lipid metabolism; malonyl-CoA biosynthesis; malonyl-CoA from acetyl-CoA: step 1/1. In terms of biological role, component of the acetyl coenzyme A carboxylase (ACC) complex. First, biotin carboxylase catalyzes the carboxylation of biotin on its carrier protein (BCCP) and then the CO(2) group is transferred by the carboxyltransferase to acetyl-CoA to form malonyl-CoA. In Staphylococcus aureus (strain JH9), this protein is Acetyl-coenzyme A carboxylase carboxyl transferase subunit alpha.